The sequence spans 754 residues: Subtilisin-like protease SBT3.12 (754 aa).

The first 28 residues, 1–28, serve as a signal peptide directing secretion; that stretch reads MGIVKGRSRAGLFIGFLFIVNVGFCVFA. Positions 29–117 are cleaved as a propeptide — activation peptide; the sequence is QESSNEERKI…VAPNRKVELQ (89 aa). The 78-residue stretch at 39–116 folds into the Inhibitor I9 domain; it reads YVVHLGVRRH…SVAPNRKVEL (78 aa). One can recognise a Peptidase S8 domain in the interval 121 to 606; that stretch reads IYDYLGLSPS…AGLVNAERAK (486 aa). The active-site Charge relay system is aspartate 151. Asparagine 206 carries an N-linked (GlcNAc...) asparagine glycan. The active-site Charge relay system is the histidine 224. Residues asparagine 239 and asparagine 369 are each glycosylated (N-linked (GlcNAc...) asparagine). Serine 537 (charge relay system) is an active-site residue. Residues asparagine 629 and asparagine 740 are each glycosylated (N-linked (GlcNAc...) asparagine).

This sequence belongs to the peptidase S8 family.

It is found in the secreted. The sequence is that of Subtilisin-like protease SBT3.12 from Arabidopsis thaliana (Mouse-ear cress).